Here is a 1117-residue protein sequence, read N- to C-terminus: Cytospin-A (1117 aa).

Disordered stretches follow at residues 1–176 (MKKA…NQIS), 293–323 (SLSPEITPGNQSDGGGTLTSSVEGSAPGSVE), and 358–390 (SSDDALDAPSSSESEGIPSIERSRKGSSGNASE). Low complexity predominate over residues 45–90 (TAASLSKTKSSDDLLAGMAGGVTVTNGVKGKKSTCPSAAPSASAPA). Over residues 93–117 (TVENKSKISTGTASSTKRSTSTGNK) the composition is skewed to polar residues. Composition is skewed to basic and acidic residues over residues 120–131 (SSTRERLRERTR) and 158–171 (TATECDVRMSKSKS). The stretch at 168 to 280 (KSKSDNQISD…LNALGFSLEQ (113 aa)) forms a coiled coil. Over residues 293–303 (SLSPEITPGNQ) the composition is skewed to polar residues. A compositionally biased stretch (low complexity) spans 358–377 (SSDDALDAPSSSESEGIPSI). A phosphoserine mark is found at Ser-384, Ser-385, and Ser-389. 2 coiled-coil regions span residues 394-449 (ACLT…MESL) and 487-807 (RYME…RGRV). 3 positions are modified to phosphoserine: Ser-868, Ser-881, and Ser-887. Positions 920–997 (TSSASRPASL…PTTRSRIREE (78 aa)) are disordered. Positions 946–956 (RSSEEVKRDIS) are enriched in basic and acidic residues. The segment covering 971 to 990 (TTSPQLSLSSSPTASVTPTT) has biased composition (low complexity). The Calponin-homology (CH) domain maps to 1011–1116 (GSKRNALLKW…YVTAIYKYFE (106 aa)).

It belongs to the cytospin-A family. May interact with both microtubules and actin cytoskeleton.

It localises to the cytoplasm. The protein localises to the cytoskeleton. The protein resides in the spindle. It is found in the cell junction. Its subcellular location is the gap junction. Involved in cytokinesis and spindle organization. May play a role in actin cytoskeleton organization and microtubule stabilization and hence required for proper cell adhesion and migration. The protein is Cytospin-A (SPECC1L) of Homo sapiens (Human).